Consider the following 557-residue polypeptide: Ribonuclease J 2 (557 aa).

Residues histidine 76, histidine 78, histidine 144, and glutamate 166 each coordinate Zn(2+). Residue 366-370 coordinates substrate; it reads HASSH.

The protein belongs to the metallo-beta-lactamase superfamily. RNA-metabolizing metallo-beta-lactamase-like family. Bacterial RNase J subfamily. In terms of assembly, homodimer, may be a subunit of the RNA degradosome. It depends on Zn(2+) as a cofactor.

It localises to the cytoplasm. Functionally, an RNase that has 5'-3' exonuclease and possibly endoonuclease activity. Involved in maturation of rRNA and in some organisms also mRNA maturation and/or decay. This chain is Ribonuclease J 2, found in Staphylococcus saprophyticus subsp. saprophyticus (strain ATCC 15305 / DSM 20229 / NCIMB 8711 / NCTC 7292 / S-41).